Here is a 532-residue protein sequence, read N- to C-terminus: MGATKSKPREGGPRSRSLDIVEGSHQPFTSLSASQTPNKSLDSHRPPAQPFGGNCDLTPFGGINFSDTITSPQRTGPLAGGVTTFVALYDYESRTETDLSFKKGERLQIVNNTEGDWWLARSLSSGQTGYIPSNYVAPSDSIQAEEWYLGKITRREAERLLLSLENPRGTFLVRESETTKGAYCLSVSDYDANRGLNVKHYKIRKLDSGGFYITSRTQFISLQQLVAYYSKHADGLCHRLTTVCPTAKPQTQGLSRDAWEIPRDSLRLELKLGQGCFGEVWMGTWNGTTRVAIKTLKPGTMSPEAFLQEAQVMKKLRHEKLVQLYAVVSEEPIYIVTEYISKGSLLDFLKGEMGRYLRLPQLVDMAAQIASGMAYVERMNYVHRDLRAANILVGENLVCKVADFGLARLIEDNEYTARQGAKFPIKWTAPEAALYGRFTIKSDVWSFGILLTELTTKGRVPYPGMVNREVLDQVERGYRMPCPPDCPESLHDLMFQCWRKDPEERPTFEYLQAFLEDYFTATEPQYQPGDNL.

Positions 1-52 (MGATKSKPREGGPRSRSLDIVEGSHQPFTSLSASQTPNKSLDSHRPPAQPFG) are disordered. A lipid anchor (N-myristoyl glycine) is attached at glycine 2. Residues 7–19 (KPREGGPRSRSLD) are compositionally biased toward basic and acidic residues. The span at 26–40 (QPFTSLSASQTPNKS) shows a compositional bias: polar residues. The SH3 domain occupies 80–141 (GGVTTFVALY…PSNYVAPSDS (62 aa)). The SH2 domain occupies 147–244 (WYLGKITRRE…GLCHRLTTVC (98 aa)). Residues 266–519 (LRLELKLGQG…YLQAFLEDYF (254 aa)) form the Protein kinase domain. ATP is bound by residues 272 to 280 (LGQGCFGEV) and lysine 294. Aspartate 385 functions as the Proton acceptor in the catalytic mechanism. A Phosphotyrosine; by autocatalysis modification is found at tyrosine 415.

Belongs to the protein kinase superfamily. Tyr protein kinase family. SRC subfamily.

It is found in the cell membrane. The enzyme catalyses L-tyrosyl-[protein] + ATP = O-phospho-L-tyrosyl-[protein] + ADP + H(+). In Xenopus laevis (African clawed frog), this protein is Tyrosine-protein kinase Src-1 (src-a).